Reading from the N-terminus, the 277-residue chain is Carbonyl reductase [NADPH] 1 (277 aa).

NADP(+) contacts are provided by residues 10–34, 63–64, and asparagine 90; these read VTGS…GEVV and DI. Residue serine 30 is modified to Phosphoserine. Residues 95–97 and glutamine 106 contribute to the glutathione site; that span reads FKV. Residue serine 140 participates in substrate binding. Residue 193-194 coordinates glutathione; it reads AY. Tyrosine 194 functions as the Proton acceptor in the catalytic mechanism. NADP(+) contacts are provided by residues 194-198 and 231-233; these read YGVTK and VRT.

The protein belongs to the short-chain dehydrogenases/reductases (SDR) family. As to quaternary structure, monomer.

Its subcellular location is the cytoplasm. It carries out the reaction a secondary alcohol + NADP(+) = a ketone + NADPH + H(+). The enzyme catalyses prostaglandin F2alpha + NADP(+) = prostaglandin E2 + NADPH + H(+). It catalyses the reaction prostaglandin E1 + NADP(+) = 15-oxoprostaglandin E1 + NADPH + H(+). The catalysed reaction is prostaglandin D2 + NADP(+) = 15-oxoprostaglandin D2 + NADPH + H(+). It carries out the reaction menadione + NADPH + H(+) = menadiol + NADP(+). The enzyme catalyses prostaglandin E2 + NADP(+) = 15-oxoprostaglandin E2 + NADPH + H(+). It catalyses the reaction prostaglandin F2alpha + NADP(+) = 15-oxoprostaglandin F2alpha + NADPH + H(+). The catalysed reaction is daunorubicin + NADPH + H(+) = 13-dihydrodaunorubicin + NADP(+). It carries out the reaction S-nitrosoglutathione + NADPH + H(+) = S-(hydroxysulfenamide)glutathione + NADP(+). The enzyme catalyses a primary alcohol + NADP(+) = an aldehyde + NADPH + H(+). It catalyses the reaction cortisol + NADPH + H(+) = 20beta-dihydrocortisol + NADP(+). The catalysed reaction is corticosterone + NADPH + H(+) = 20beta-dihydrocorticosterone + NADP(+). In terms of biological role, NADPH-dependent reductase with broad substrate specificity. Catalyzes the reduction of a wide variety of carbonyl compounds including quinones, prostaglandins, menadione, plus various xenobiotics. Catalyzes the reduction of the antitumor anthracyclines doxorubicin and daunorubicin to the cardiotoxic compounds doxorubicinol and daunorubicinol. Can convert prostaglandin E to prostaglandin F2-alpha. Can bind glutathione, which explains its higher affinity for glutathione-conjugated substrates. Catalyzes the reduction of S-nitrosoglutathione. In addition, participates in the glucocorticoid metabolism by catalyzing the NADPH-dependent cortisol/corticosterone into 20beta-dihydrocortisol (20b-DHF) or 20beta-corticosterone (20b-DHB), which are weak agonists of NR3C1 and NR3C2 in adipose tissue. The chain is Carbonyl reductase [NADPH] 1 from Macaca fascicularis (Crab-eating macaque).